Here is a 204-residue protein sequence, read N- to C-terminus: 3-isopropylmalate dehydratase small subunit (204 aa).

Belongs to the LeuD family. LeuD type 1 subfamily. In terms of assembly, heterodimer of LeuC and LeuD.

It catalyses the reaction (2R,3S)-3-isopropylmalate = (2S)-2-isopropylmalate. Its pathway is amino-acid biosynthesis; L-leucine biosynthesis; L-leucine from 3-methyl-2-oxobutanoate: step 2/4. Catalyzes the isomerization between 2-isopropylmalate and 3-isopropylmalate, via the formation of 2-isopropylmaleate. The chain is 3-isopropylmalate dehydratase small subunit from Clavibacter michiganensis subsp. michiganensis (strain NCPPB 382).